Consider the following 500-residue polypeptide: Chromosomal replication initiator protein DnaA (500 aa).

The interval 1-81 (MVNASGDPVI…LQALRTVTGE (81 aa)) is domain I, interacts with DnaA modulators. Residues 81 to 155 (ENMFPAFKVV…QQKMNRDPET (75 aa)) are domain II. The interval 156–377 (HLNKNFTFDS…GALTRVTAVA (222 aa)) is domain III, AAA+ region. ATP-binding residues include G200, G202, K203, and T204. The domain IV, binds dsDNA stretch occupies residues 378 to 500 (SLSNQPVTRA…TVRLKQSNTN (123 aa)).

This sequence belongs to the DnaA family. Oligomerizes as a right-handed, spiral filament on DNA at oriC.

It is found in the cytoplasm. Plays an essential role in the initiation and regulation of chromosomal replication. ATP-DnaA binds to the origin of replication (oriC) to initiate formation of the DNA replication initiation complex once per cell cycle. Binds the DnaA box (a 9 base pair repeat at the origin) and separates the double-stranded (ds)DNA. Forms a right-handed helical filament on oriC DNA; dsDNA binds to the exterior of the filament while single-stranded (ss)DNA is stabiized in the filament's interior. The ATP-DnaA-oriC complex binds and stabilizes one strand of the AT-rich DNA unwinding element (DUE), permitting loading of DNA polymerase. After initiation quickly degrades to an ADP-DnaA complex that is not apt for DNA replication. Binds acidic phospholipids. The protein is Chromosomal replication initiator protein DnaA of Bifidobacterium longum subsp. infantis (strain ATCC 15697 / DSM 20088 / JCM 1222 / NCTC 11817 / S12).